The following is a 223-amino-acid chain: Deoxyribose-phosphate aldolase (223 aa).

Catalysis depends on Asp89, which acts as the Proton donor/acceptor. Lys152 functions as the Schiff-base intermediate with acetaldehyde in the catalytic mechanism. Lys181 acts as the Proton donor/acceptor in catalysis.

The protein belongs to the DeoC/FbaB aldolase family. DeoC type 1 subfamily.

The protein localises to the cytoplasm. It carries out the reaction 2-deoxy-D-ribose 5-phosphate = D-glyceraldehyde 3-phosphate + acetaldehyde. It functions in the pathway carbohydrate degradation; 2-deoxy-D-ribose 1-phosphate degradation; D-glyceraldehyde 3-phosphate and acetaldehyde from 2-deoxy-alpha-D-ribose 1-phosphate: step 2/2. Functionally, catalyzes a reversible aldol reaction between acetaldehyde and D-glyceraldehyde 3-phosphate to generate 2-deoxy-D-ribose 5-phosphate. The polypeptide is Deoxyribose-phosphate aldolase (Listeria monocytogenes serotype 4b (strain CLIP80459)).